A 109-amino-acid polypeptide reads, in one-letter code: Aquaporin-2 (109 aa).

At 1–6 the chain is on the cytoplasmic side; the sequence is SIAFSR. Residues 7–27 traverse the membrane as a helical segment; that stretch reads AVFAEFLATLLFVFFGLGSAL. Over 28-35 the chain is Extracellular; that stretch reads NWPSALPS. The helical transmembrane segment at 36-54 threads the bilayer; it reads TLQIAMAFGLGIGTLVQAL. The Cytoplasmic portion of the chain corresponds to 55 to 59; sequence GHVSG. An intramembrane region (discontinuously helical) is located at residues 60–69; that stretch reads AHINPAVTVA. The NPA 1 signature appears at 63 to 65; sequence NPA. Residues 70–80 lie on the Cytoplasmic side of the membrane; the sequence is CLVGCHVSFLR. The chain crosses the membrane as a helical span at residues 81-102; sequence AAFYVAAQLLGAVAGAALLHEI. At 103–109 the chain is on the extracellular side; the sequence is TPAEVRG.

It belongs to the MIP/aquaporin (TC 1.A.8) family. In terms of assembly, homotetramer. In terms of processing, serine phosphorylation is necessary and sufficient for expression at the apical membrane. Endocytosis is not phosphorylation-dependent. Post-translationally, N-glycosylated.

It localises to the apical cell membrane. Its subcellular location is the basolateral cell membrane. The protein resides in the cell membrane. The protein localises to the cytoplasmic vesicle membrane. It is found in the golgi apparatus. It localises to the trans-Golgi network membrane. It catalyses the reaction H2O(in) = H2O(out). The enzyme catalyses glycerol(in) = glycerol(out). Its function is as follows. Forms a water-specific channel that provides the plasma membranes of renal collecting duct with high permeability to water, thereby permitting water to move in the direction of an osmotic gradient. Plays an essential role in renal water homeostasis. Could also be permeable to glycerol. This Oryctolagus cuniculus (Rabbit) protein is Aquaporin-2.